The chain runs to 427 residues: 3-phosphoshikimate 1-carboxyvinyltransferase (427 aa).

3-phosphoshikimate-binding residues include K20, S21, and R25. Phosphoenolpyruvate is bound at residue K20. Positions 92 and 120 each coordinate phosphoenolpyruvate. Residues S166, Q168, D312, and K339 each contribute to the 3-phosphoshikimate site. Q168 contributes to the phosphoenolpyruvate binding site. D312 functions as the Proton acceptor in the catalytic mechanism. Residues R343 and R385 each contribute to the phosphoenolpyruvate site.

It belongs to the EPSP synthase family. In terms of assembly, monomer.

Its subcellular location is the cytoplasm. The catalysed reaction is 3-phosphoshikimate + phosphoenolpyruvate = 5-O-(1-carboxyvinyl)-3-phosphoshikimate + phosphate. It functions in the pathway metabolic intermediate biosynthesis; chorismate biosynthesis; chorismate from D-erythrose 4-phosphate and phosphoenolpyruvate: step 6/7. Catalyzes the transfer of the enolpyruvyl moiety of phosphoenolpyruvate (PEP) to the 5-hydroxyl of shikimate-3-phosphate (S3P) to produce enolpyruvyl shikimate-3-phosphate and inorganic phosphate. In Streptococcus mutans serotype c (strain ATCC 700610 / UA159), this protein is 3-phosphoshikimate 1-carboxyvinyltransferase.